Consider the following 209-residue polypeptide: Large ribosomal subunit protein uL3 (209 aa).

The disordered stretch occupies residues 118–150; it reads GFQGAIKRHGQSRGPMTHGSRYHRRPGSMGPVD.

This sequence belongs to the universal ribosomal protein uL3 family. As to quaternary structure, part of the 50S ribosomal subunit. Forms a cluster with proteins L14 and L19.

Functionally, one of the primary rRNA binding proteins, it binds directly near the 3'-end of the 23S rRNA, where it nucleates assembly of the 50S subunit. This chain is Large ribosomal subunit protein uL3, found in Bacillus pumilus (strain SAFR-032).